The primary structure comprises 164 residues: Peptidyl-prolyl cis-trans isomerase A (164 aa).

M1 is modified (N-acetylmethionine). An N-acetylvaline; in Peptidyl-prolyl cis-trans isomerase A, N-terminally processed modification is found at V2. The PPIase cyclophilin-type domain occupies 7–163 (FFDITADGEP…KKITISDCGQ (157 aa)). K28 carries the post-translational modification N6-acetyllysine; alternate. A Glycyl lysine isopeptide (Lys-Gly) (interchain with G-Cter in SUMO2); alternate cross-link involves residue K28. K28 participates in a covalent cross-link: Glycyl lysine isopeptide (Lys-Gly) (interchain with G-Cter in ubiquitin); alternate. 2 positions are modified to N6-acetyllysine: K44 and K76. S77 carries the phosphoserine modification. K82 carries the N6-acetyllysine; alternate modification. K82 is covalently cross-linked (Glycyl lysine isopeptide (Lys-Gly) (interchain with G-Cter in SUMO2); alternate). T93 carries the phosphothreonine modification. N-linked (GlcNAc...) asparagine glycosylation occurs at N108. Residues K125, K131, and K133 each carry the N6-acetyllysine modification.

This sequence belongs to the cyclophilin-type PPIase family. PPIase A subfamily. Interacts with protein phosphatase PPP3CA/calcineurin A. Interacts with isoform 2 of BSG/CD147. Interacts with FOXO1; the interaction promotes FOXO1 dephosphorylation, nuclear accumulation and transcriptional activity. Interacts with integrin ITGA2B:ITGB3; the interaction is ROS and peptidyl-prolyl cis-trans isomerase (PPIase) activity-dependent and is increased in the presence of thrombin. Interacts with MAP3K5. Interacts with TARDBP; the interaction is dependent on the RNA-binding activity of TARDBP and the PPIase activity of PPIA/CYPA and the acetylation of PPIA/CYPA at Lys-125 favors the interaction. Interacts with HNRNPA1, HNRNPA2B1, HNRNPC, RBMX, HNRNPK and HNRNPM. Acetylation at Lys-125 markedly inhibits catalysis of cis to trans isomerization. PPIA acetylation also antagonizes the immunosuppressive effects of cyclosporine by inhibiting the sequential steps of cyclosporine binding and calcineurin inhibition. Acetylation at Lys-125 favors the interaction with TARDBP.

It is found in the cytoplasm. Its subcellular location is the secreted. The protein localises to the nucleus. The catalysed reaction is [protein]-peptidylproline (omega=180) = [protein]-peptidylproline (omega=0). With respect to regulation, binds cyclosporin A (CsA). CsA mediates some of its effects via an inhibitory action on PPIase. In terms of biological role, catalyzes the cis-trans isomerization of proline imidic peptide bonds in oligopeptides. Exerts a strong chemotactic effect on leukocytes partly through activation of one of its membrane receptors BSG/CD147, initiating a signaling cascade that culminates in MAPK/ERK activation. Activates endothelial cells (ECs) in a proinflammatory manner by stimulating activation of NF-kappa-B and ERK, JNK and p38 MAP-kinases and by inducing expression of adhesion molecules including SELE and VCAM1. Induces apoptosis in ECs by promoting the FOXO1-dependent expression of CCL2 and BCL2L11 which are involved in EC chemotaxis and apoptosis. In response to oxidative stress, initiates proapoptotic and antiapoptotic signaling in ECs via activation of NF-kappa-B and AKT1 and up-regulation of antiapoptotic protein BCL2. Negatively regulates MAP3K5/ASK1 kinase activity, autophosphorylation and oxidative stress-induced apoptosis mediated by MAP3K5/ASK1. Necessary for the assembly of TARDBP in heterogeneous nuclear ribonucleoprotein (hnRNP) complexes and regulates TARDBP binding to RNA UG repeats and TARDBP-dependent expression of HDAC6, ATG7 and VCP which are involved in clearance of protein aggregates. Plays an important role in platelet activation and aggregation. Regulates calcium mobilization and integrin ITGA2B:ITGB3 bidirectional signaling via increased ROS production as well as by facilitating the interaction between integrin and the cell cytoskeleton. Binds heparan sulfate glycosaminoglycans. The chain is Peptidyl-prolyl cis-trans isomerase A (Ppia) from Rattus norvegicus (Rat).